We begin with the raw amino-acid sequence, 340 residues long: MLLIDLAGYELTQEEQELLEHPLVSGLILFTRNFHDKAQLQALIKSVRQRVKKPLLITVDQEGGRVQRFREGFTKLPAMQSFLQLDRLQLAQEAGWLMSAEMFALDIDLSFAPVLDLGHCSKAIGDRSFGEDVATMLPVAEAFIDGMREIGMAATGKHFPGHGHVIADSHLETPFDDRPKETIFNHDIQPFKQLIAKGKLSAIMPAHVIYTQCDSQPASGSSYWLKEILRKQLQFNGVIFSDDLGMKGAGFMGNYVERSEKALQAGCDLLLLCNEPDGVVQVLDNLKYQPTPTQKERYLSLMKRKQISWSELTASPRWQQAHQQLATLQDQWLEWKAQNA.

Substrate is bound by residues Asp60, Arg68, Arg127, and 157 to 158 (KH). Residue His170 is the Proton donor/acceptor of the active site. Catalysis depends on Asp242, which acts as the Nucleophile.

The protein belongs to the glycosyl hydrolase 3 family. NagZ subfamily.

It localises to the cytoplasm. The catalysed reaction is Hydrolysis of terminal non-reducing N-acetyl-D-hexosamine residues in N-acetyl-beta-D-hexosaminides.. It participates in cell wall biogenesis; peptidoglycan recycling. Its function is as follows. Plays a role in peptidoglycan recycling by cleaving the terminal beta-1,4-linked N-acetylglucosamine (GlcNAc) from peptide-linked peptidoglycan fragments, giving rise to free GlcNAc, anhydro-N-acetylmuramic acid and anhydro-N-acetylmuramic acid-linked peptides. The chain is Beta-hexosaminidase from Glaesserella parasuis serovar 5 (strain SH0165) (Haemophilus parasuis).